Consider the following 266-residue polypeptide: Undecaprenyl-diphosphatase (266 aa).

The next 8 helical transmembrane spans lie at 1–21 (MDTF…FLPI), 39–59 (QGLS…VIYF), 87–107 (WWII…KDFI), 114–134 (AEVI…ADKM), 149–169 (ALLI…RSGA), 183–203 (AAAR…AILV), 218–238 (ALIL…HYFL), and 246–266 (MTPF…FIFF).

Belongs to the UppP family.

Its subcellular location is the cell inner membrane. The enzyme catalyses di-trans,octa-cis-undecaprenyl diphosphate + H2O = di-trans,octa-cis-undecaprenyl phosphate + phosphate + H(+). Functionally, catalyzes the dephosphorylation of undecaprenyl diphosphate (UPP). Confers resistance to bacitracin. The sequence is that of Undecaprenyl-diphosphatase from Shewanella baltica (strain OS223).